We begin with the raw amino-acid sequence, 468 residues long: Transmembrane protein 151A (468 aa).

The disordered stretch occupies residues 1 to 20; that stretch reads MPEGEGGDCGEVPALVPDGE. Helical transmembrane passes span 45 to 65 and 98 to 118; these read CLLL…CRLA and YLYI…AECW. A disordered region spans residues 384 to 438; it reads VSSNSLPPARPSGPRLPFSRSRLSLGAGGRTTPGVFRSLSGGPLGRRGEDTEPLE.

Belongs to the TMEM151 family. As to expression, highly expressed in the central nervous system (CNS) including the cerebral cortex, hippocampus, spinal cord, brainstem, and thalamus. Expression is relatively low during postnatal stages but highly expressed at postnatal day 14 (P14), and declined in adulthood. Also expressed in the stomach, heart, liver, spleen, lung, kidney, and muscle.

It is found in the endoplasmic reticulum membrane. It localises to the cell projection. Its subcellular location is the axon. The protein localises to the dendrite. The polypeptide is Transmembrane protein 151A (Tmem151a) (Mus musculus (Mouse)).